The sequence spans 263 residues: 4-hydroxy-2-oxo-heptane-1,7-dioate aldolase (263 aa).

His-45 functions as the Proton acceptor in the catalytic mechanism. Substrate is bound at residue Gln-147. Glu-149 lines the a divalent metal cation pocket. Substrate-binding residues include Ala-174 and Asp-175. Asp-175 is an a divalent metal cation binding site.

It belongs to the HpcH/HpaI aldolase family. In terms of assembly, homohexamer; trimer of dimers. A divalent metal cation is required as a cofactor.

It carries out the reaction 4-hydroxy-2-oxoheptanedioate = succinate semialdehyde + pyruvate. Its pathway is aromatic compound metabolism; 4-hydroxyphenylacetate degradation; pyruvate and succinate semialdehyde from 4-hydroxyphenylacetate: step 7/7. Catalyzes the reversible retro-aldol cleavage of 4-hydroxy-2-ketoheptane-1,7-dioate (HKHD) to pyruvate and succinic semialdehyde. The sequence is that of 4-hydroxy-2-oxo-heptane-1,7-dioate aldolase from Salmonella paratyphi A (strain ATCC 9150 / SARB42).